Consider the following 131-residue polypeptide: UPF0342 protein DSY1594 (131 aa).

The protein belongs to the UPF0342 family.

In Desulfitobacterium hafniense (strain Y51), this protein is UPF0342 protein DSY1594.